A 95-amino-acid chain; its full sequence is Protein TusB (95 aa).

The protein belongs to the DsrH/TusB family. As to quaternary structure, heterohexamer, formed by a dimer of trimers. The hexameric TusBCD complex contains 2 copies each of TusB, TusC and TusD. The TusBCD complex interacts with TusE.

Its subcellular location is the cytoplasm. Its function is as follows. Part of a sulfur-relay system required for 2-thiolation of 5-methylaminomethyl-2-thiouridine (mnm(5)s(2)U) at tRNA wobble positions. The polypeptide is Protein TusB (Yersinia pseudotuberculosis serotype O:1b (strain IP 31758)).